The chain runs to 636 residues: DNA mismatch repair protein MutL (636 aa).

The interval 341–420 (APLINKPEQQ…PGAEEYTPEA (80 aa)) is disordered. Residues 348–358 (EQQKLDFDQVR) are compositionally biased toward basic and acidic residues.

The protein belongs to the DNA mismatch repair MutL/HexB family.

Functionally, this protein is involved in the repair of mismatches in DNA. It is required for dam-dependent methyl-directed DNA mismatch repair. May act as a 'molecular matchmaker', a protein that promotes the formation of a stable complex between two or more DNA-binding proteins in an ATP-dependent manner without itself being part of a final effector complex. The polypeptide is DNA mismatch repair protein MutL (Bacillus licheniformis (strain ATCC 14580 / DSM 13 / JCM 2505 / CCUG 7422 / NBRC 12200 / NCIMB 9375 / NCTC 10341 / NRRL NRS-1264 / Gibson 46)).